A 345-amino-acid polypeptide reads, in one-letter code: Cytoskeleton protein RodZ (345 aa).

At 1–111 the chain is on the cytoplasmic side; it reads MNTEASQDQT…LGKKHKKRDG (111 aa). The region spanning 19–79 is the HTH cro/C1-type domain; it reads LRQARESLGL…KLVHLPEDEL (61 aa). Residues 30 to 49 constitute a DNA-binding region (H-T-H motif); that stretch reads QQTVAERLCLKVSTIRDIEE. A helical; Signal-anchor for type II membrane protein transmembrane segment spans residues 112–132; sequence WLMSFTWLIVLVVLGLTGAWW. The Periplasmic portion of the chain corresponds to 133–345; that stretch reads WQNHQAQQAE…RVARLTVGVE (213 aa). The disordered stretch occupies residues 151-260; the sequence is SAQLSQNGGQ…LPTADAGVSG (110 aa). Residues 188 to 225 are compositionally biased toward polar residues; sequence PLTNHSGSAITNSATTSSVPKTTSTEPVDTANTNTTMH. Positions 229 to 241 are enriched in low complexity; it reads AASAAVSPSQVPQ.

It belongs to the RodZ family.

Its subcellular location is the cell inner membrane. Functionally, cytoskeletal protein that is involved in cell-shape control through regulation of the length of the long axis. This chain is Cytoskeleton protein RodZ, found in Yersinia pestis (strain Pestoides F).